The following is a 347-amino-acid chain: Peptidoglycan recognition protein 3 (347 aa).

The first 26 residues, 1-26 (MLVSWDHPKMLPRLLGFLALSLLACG), serve as a signal peptide directing secretion. N-acetylmuramoyl-L-alanine amidase domains are found at residues 77–185 (LQSQ…KACP) and 206–328 (PAKF…VSNI). N-linked (GlcNAc...) asparagine glycosylation occurs at N120. Intrachain disulfides connect C184/C306, C200/C244, and C220/C226. Positions 237 and 248 each coordinate peptidoglycan. An interaction with murein region spans residues 270–275 (HTYGYN).

The protein belongs to the N-acetylmuramoyl-L-alanine amidase 2 family. In terms of assembly, monomer. Homodimer; disulfide-linked. Heterodimer with PGLYRP4; disulfide-linked. As to expression, detected in lung, spleen and stomach, and at low levels in eye, heart, thymus and testis.

The protein localises to the secreted. In terms of biological role, pattern receptor that binds to murein peptidoglycans (PGN) of Gram-positive bacteria. Has bactericidal activity towards Gram-positive bacteria. May kill Gram-positive bacteria by interfering with peptidoglycan biosynthesis. Also binds to Gram-negative bacteria, and has bacteriostatic activity towards Gram-negative bacteria. Plays a role in innate immunity. The chain is Peptidoglycan recognition protein 3 (Pglyrp3) from Mus musculus (Mouse).